A 142-amino-acid chain; its full sequence is Large ribosomal subunit protein uL11 (142 aa).

Belongs to the universal ribosomal protein uL11 family. As to quaternary structure, part of the ribosomal stalk of the 50S ribosomal subunit. Interacts with L10 and the large rRNA to form the base of the stalk. L10 forms an elongated spine to which L12 dimers bind in a sequential fashion forming a multimeric L10(L12)X complex. One or more lysine residues are methylated.

Functionally, forms part of the ribosomal stalk which helps the ribosome interact with GTP-bound translation factors. The protein is Large ribosomal subunit protein uL11 of Serratia proteamaculans (strain 568).